We begin with the raw amino-acid sequence, 594 residues long: DNA mismatch repair protein MutL (594 aa).

It belongs to the DNA mismatch repair MutL/HexB family.

This protein is involved in the repair of mismatches in DNA. It is required for dam-dependent methyl-directed DNA mismatch repair. May act as a 'molecular matchmaker', a protein that promotes the formation of a stable complex between two or more DNA-binding proteins in an ATP-dependent manner without itself being part of a final effector complex. The protein is DNA mismatch repair protein MutL of Rhizorhabdus wittichii (strain DSM 6014 / CCUG 31198 / JCM 15750 / NBRC 105917 / EY 4224 / RW1) (Sphingomonas wittichii).